A 779-amino-acid chain; its full sequence is Nucleolar complex protein 3 homolog (779 aa).

Disordered stretches follow at residues Met-1–Thr-20 and Asn-100–Ser-189. Over residues Asp-114–Val-124 the composition is skewed to acidic residues. The span at Glu-136 to Glu-160 shows a compositional bias: basic and acidic residues. Acidic residues predominate over residues Val-161–Asp-178. The stretch at Ala-434–Lys-474 forms a coiled coil.

The protein belongs to the CBF/MAK21 family.

The protein resides in the nucleus. It localises to the nucleolus. The chain is Nucleolar complex protein 3 homolog from Caenorhabditis briggsae.